The following is a 199-amino-acid chain: MARVLVLYYSAYGHIETMAHAVAEGARSAGAEVAVKRVPELVPEDVAKASHFKLDQPAPVATVEELADYDAIIFGAGTRYGTVASQLRNFIDQTGGLWAKGKLVGKVGSAFTSSATQHGGQESTILGLIPTMMHHGMVVVGLPYAFQGQMGVEEVKGGSPYGASTITGGDGSRQPSAVELEAARFQGAHVARIAAKLAD.

In terms of domain architecture, Flavodoxin-like spans 4-190 (VLVLYYSAYG…EAARFQGAHV (187 aa)). Residues 10–15 (SAYGHI) and 78–80 (TRY) each bind FMN. Y12 contributes to the NAD(+) binding site. Substrate is bound at residue W98. FMN is bound by residues 113–119 (SSATQHG) and H134.

Belongs to the WrbA family. FMN serves as cofactor.

The catalysed reaction is a quinone + NADH + H(+) = a quinol + NAD(+). It catalyses the reaction a quinone + NADPH + H(+) = a quinol + NADP(+). In Rhizobium meliloti (strain 1021) (Ensifer meliloti), this protein is NAD(P)H dehydrogenase (quinone) 1.